Reading from the N-terminus, the 313-residue chain is D-alanine--D-alanine ligase (313 aa).

The region spanning 108 to 308 (KLVWQQTGVP…YSELVVKVLS (201 aa)) is the ATP-grasp domain. 138-193 (VAKLGLPLFVKPASEGSSVAVLKVKTADALPAALAEAATHDKIVIVEKSIEGGGEY) contacts ATP. Residues Asp-262, Glu-275, and Asn-277 each coordinate Mg(2+).

This sequence belongs to the D-alanine--D-alanine ligase family. Mg(2+) is required as a cofactor. Mn(2+) serves as cofactor.

It is found in the cytoplasm. It carries out the reaction 2 D-alanine + ATP = D-alanyl-D-alanine + ADP + phosphate + H(+). It functions in the pathway cell wall biogenesis; peptidoglycan biosynthesis. In terms of biological role, cell wall formation. This chain is D-alanine--D-alanine ligase, found in Burkholderia cenocepacia (strain HI2424).